The primary structure comprises 477 residues: Tyrosine-protein kinase transforming protein Fes (477 aa).

The tract at residues 49–76 (GEPPPVLLLQDDRHSTSSSEQEREGGRT) is disordered. The span at 58-74 (QDDRHSTSSSEQEREGG) shows a compositional bias: basic and acidic residues. The SH2 domain maps to 115 to 204 (WYHGALPRAE…KSGIVLNRAV (90 aa)). A Protein kinase domain is found at 216–477 (LVLGEQIGRG…ELQSIRKRHR (262 aa)). ATP is bound by residues 222-230 (IGRGNFGEV) and Lys-245. The active-site Proton acceptor is the Asp-338. Residue Tyr-368 is modified to Phosphotyrosine; by autocatalysis.

The protein belongs to the protein kinase superfamily. Tyr protein kinase family. Fes/fps subfamily.

The enzyme catalyses L-tyrosyl-[protein] + ATP = O-phospho-L-tyrosyl-[protein] + ADP + H(+). This chain is Tyrosine-protein kinase transforming protein Fes (V-FES), found in Feline sarcoma virus (strain Snyder-Theilen).